A 713-amino-acid chain; its full sequence is Histone-lysine N-methyltransferase SETDB2 (713 aa).

The segment at 78–109 is disordered; sequence PEVNTHRSNHTPVTQSEQENKSSAVPSASCDN. Positions 87-109 are enriched in polar residues; sequence HTPVTQSEQENKSSAVPSASCDN. Residues 161 to 233 form the MBD domain; it reads LSLKGENPLQ…DNFSFNTYVQ (73 aa). The Pre-SET domain occupies 294–367; the sequence is DSCDCSEGCI…MCQNRVIQHG (74 aa). Zn(2+) is bound by residues Cys-296, Cys-298, Cys-302, Cys-308, Cys-310, Cys-348, Cys-352, Cys-354, and Cys-359. One can recognise an SET domain in the interval 370–688; it reads VRLQVFKSEK…ARTELTWDYG (319 aa). 380–382 is a binding site for S-adenosyl-L-methionine; it reads KGW. 2 stretches are compositionally biased toward basic and acidic residues: residues 511–534 and 579–592; these read EDKNGFKPAQEHVNSEARRAHEDL and TKQVLEVPGKKSQE. Disordered regions lie at residues 511–549 and 579–608; these read EDKNGFKPAQEHVNSEARRAHEDLSSNPAGDSEDTQLTE and TKQVLEVPGKKSQEEEPAASQSQQALCDEE. Residues Arg-642 and 645-646 contribute to the S-adenosyl-L-methionine site; that span reads NH. Zn(2+) contacts are provided by Cys-648, Cys-701, Cys-703, and Cys-708.

Belongs to the class V-like SAM-binding methyltransferase superfamily.

Its subcellular location is the nucleus. The protein localises to the chromosome. It catalyses the reaction N(6),N(6)-dimethyl-L-lysyl(9)-[histone H3] + S-adenosyl-L-methionine = N(6),N(6),N(6)-trimethyl-L-lysyl(9)-[histone H3] + S-adenosyl-L-homocysteine + H(+). In terms of biological role, histone methyltransferase involved in left-right axis specification in early development and mitosis. Specifically trimethylates 'Lys-9' of histone H3 (H3K9me3). H3K9me3 is a specific tag for epigenetic transcriptional repression that recruits HP1 (CBX1, CBX3 and/or CBX5) proteins to methylated histones. Contributes to H3K9me3 in both the interspersed repetitive elements and centromere-associated repeats. Plays a role in chromosome condensation and segregation during mitosis. In Mus musculus (Mouse), this protein is Histone-lysine N-methyltransferase SETDB2 (Setdb2).